Reading from the N-terminus, the 116-residue chain is Large ribosomal subunit protein bL19 (116 aa).

This sequence belongs to the bacterial ribosomal protein bL19 family.

Functionally, this protein is located at the 30S-50S ribosomal subunit interface and may play a role in the structure and function of the aminoacyl-tRNA binding site. The sequence is that of Large ribosomal subunit protein bL19 from Pseudomonas fluorescens (strain Pf0-1).